The following is a 389-amino-acid chain: Leucine aminopeptidase 1 (389 aa).

The first 18 residues, 1–18, serve as a signal peptide directing secretion; it reads MKSAALLLPLYAAAFAAA. Residues 19-89 constitute a propeptide that is removed on maturation; it reads AFHHEHAQAV…TLKRRINAAS (71 aa). N-linked (GlcNAc...) asparagine glycosylation is present at Asn99. 4 residues coordinate Zn(2+): His188, Asp207, Glu246, and Asp273. A disulfide bridge connects residues Cys322 and Cys326. His355 is a Zn(2+) binding site.

It belongs to the peptidase M28 family. M28E subfamily. Monomer. Zn(2+) is required as a cofactor.

It localises to the secreted. In terms of biological role, extracellular aminopeptidase that allows assimilation of proteinaceous substrates. The sequence is that of Leucine aminopeptidase 1 (lap1) from Pyrenophora teres f. teres (strain 0-1) (Barley net blotch fungus).